Reading from the N-terminus, the 102-residue chain is Monothiol glutaredoxin-S7 (102 aa).

In terms of domain architecture, Glutaredoxin spans 1 to 101 (MEKLQKMTSE…PMLKRVGALW (101 aa)). Cys-21 lines the [2Fe-2S] cluster pocket. The short motif at 99–102 (ALWL) is the Responsive for interaction with TGA factors element.

This sequence belongs to the glutaredoxin family. CC-type subfamily.

Its subcellular location is the cytoplasm. It is found in the nucleus. In terms of biological role, may only reduce GSH-thiol disulfides, but not protein disulfides. This is Monothiol glutaredoxin-S7 (GRXS7) from Arabidopsis thaliana (Mouse-ear cress).